A 457-amino-acid polypeptide reads, in one-letter code: Dihydrolipoyl dehydrogenase (457 aa).

FAD is bound by residues 32–40 (EKQYFGGVC), K49, and A113. A disulfide bond links C40 and C45. NAD(+) is bound by residues 178–182 (GGGVI), V235, and 262–265 (SIGR). D303 and A311 together coordinate FAD. H437 (proton acceptor) is an active-site residue.

This sequence belongs to the class-I pyridine nucleotide-disulfide oxidoreductase family. As to quaternary structure, homodimer. FAD serves as cofactor.

The protein localises to the cytoplasm. It carries out the reaction N(6)-[(R)-dihydrolipoyl]-L-lysyl-[protein] + NAD(+) = N(6)-[(R)-lipoyl]-L-lysyl-[protein] + NADH + H(+). Its function is as follows. Lipoamide dehydrogenase is a component of the alpha-ketoacid dehydrogenase complexes. The polypeptide is Dihydrolipoyl dehydrogenase (pdhD) (Mycoplasma genitalium (strain ATCC 33530 / DSM 19775 / NCTC 10195 / G37) (Mycoplasmoides genitalium)).